Consider the following 153-residue polypeptide: Catabolic 3-dehydroquinase (153 aa).

Residue Y24 is the Proton acceptor of the active site. Substrate is bound by residues N75, H81, and D88. H101 acts as the Proton donor in catalysis. Substrate contacts are provided by residues 102-103 and R112; that span reads VS.

The protein belongs to the type-II 3-dehydroquinase family. As to quaternary structure, homododecamer. Adopts a ring-like structure, composed of an arrangement of two hexameric rings stacked on top of one another.

It carries out the reaction 3-dehydroquinate = 3-dehydroshikimate + H2O. The protein operates within aromatic compound metabolism; 3,4-dihydroxybenzoate biosynthesis; 3,4-dihydroxybenzoate from 3-dehydroquinate: step 1/2. Its function is as follows. Is involved in the catabolism of quinate. Allows the utilization of quinate as carbon source via the beta-ketoadipate pathway. The polypeptide is Catabolic 3-dehydroquinase (Emericella nidulans (strain FGSC A4 / ATCC 38163 / CBS 112.46 / NRRL 194 / M139) (Aspergillus nidulans)).